The sequence spans 469 residues: Putative pyridoxal-dependent decarboxylase domain-containing protein 2 (469 aa).

A coiled-coil region spans residues 12 to 40; that stretch reads TLAEMGKNLKEAVKMLEDSQRRTEEENGK. Positions 28 to 44 are enriched in basic and acidic residues; that stretch reads EDSQRRTEEENGKKLIS. Residues 28-47 are disordered; sequence EDSQRRTEEENGKKLISRDI.

It belongs to the group II decarboxylase family. It depends on pyridoxal 5'-phosphate as a cofactor.

This Homo sapiens (Human) protein is Putative pyridoxal-dependent decarboxylase domain-containing protein 2 (PDXDC2P).